Consider the following 601-residue polypeptide: Glutathione-regulated potassium-efflux system protein KefB (601 aa).

13 helical membrane-spanning segments follow: residues S4–A24, I29–F49, E55–L75, I87–M107, A115–M135, V152–G172, H177–G197, F207–G227, L230–L250, G268–Y288, L291–L311, M324–A344, and A356–V376. One can recognise an RCK N-terminal domain in the interval K400–T519.

Belongs to the monovalent cation:proton antiporter 2 (CPA2) transporter (TC 2.A.37) family. KefB subfamily. Interacts with the regulatory subunit KefG.

It is found in the cell inner membrane. With respect to regulation, activated by adducts between glutathione and electrophiles. Pore-forming subunit of a potassium efflux system that confers protection against electrophiles. Catalyzes K(+)/H(+) antiport. In Escherichia coli (strain K12), this protein is Glutathione-regulated potassium-efflux system protein KefB.